Reading from the N-terminus, the 156-residue chain is Ribosomal RNA large subunit methyltransferase H (156 aa).

Residues L73, G104, and 123–128 contribute to the S-adenosyl-L-methionine site; that span reads ISSMTL.

Belongs to the RNA methyltransferase RlmH family. Homodimer.

Its subcellular location is the cytoplasm. It carries out the reaction pseudouridine(1915) in 23S rRNA + S-adenosyl-L-methionine = N(3)-methylpseudouridine(1915) in 23S rRNA + S-adenosyl-L-homocysteine + H(+). Specifically methylates the pseudouridine at position 1915 (m3Psi1915) in 23S rRNA. This chain is Ribosomal RNA large subunit methyltransferase H, found in Burkholderia multivorans (strain ATCC 17616 / 249).